The following is a 273-amino-acid chain: Galactose-binding lectin (273 aa).

A signal peptide spans 1–23 (MKPFCVFLTFFLLLAASSKKVDS). Residues Glu-144 and Asp-146 each coordinate Mn(2+). Ca(2+) is bound by residues Asp-146, Tyr-148, Asn-150, and Asp-155. Mn(2+) contacts are provided by Asp-155 and His-160.

The protein belongs to the leguminous lectin family. Homotetramer.

Functionally, D-galactose specific lectin. This chain is Galactose-binding lectin, found in Arachis hypogaea (Peanut).